Consider the following 275-residue polypeptide: 5'-nucleotidase SurE (275 aa).

A divalent metal cation-binding residues include D14, D15, S46, and N104.

Belongs to the SurE nucleotidase family. A divalent metal cation serves as cofactor.

The protein resides in the cytoplasm. It carries out the reaction a ribonucleoside 5'-phosphate + H2O = a ribonucleoside + phosphate. Its function is as follows. Nucleotidase that shows phosphatase activity on nucleoside 5'-monophosphates. The polypeptide is 5'-nucleotidase SurE (Synechocystis sp. (strain ATCC 27184 / PCC 6803 / Kazusa)).